Consider the following 146-residue polypeptide: Lipoprotein signal peptidase (146 aa).

The next 3 helical transmembrane spans lie at 10–30, 54–74, and 80–100; these read GLFV…LGGF, FLEG…LLFL, and FFVA…SNIL. Catalysis depends on residues Asp110 and Asp127. Residues 118-138 traverse the membrane as a helical segment; the sequence is FEFAIFNFADVMIDVAVALFL.

Belongs to the peptidase A8 family.

Its subcellular location is the cell inner membrane. The enzyme catalyses Release of signal peptides from bacterial membrane prolipoproteins. Hydrolyzes -Xaa-Yaa-Zaa-|-(S,diacylglyceryl)Cys-, in which Xaa is hydrophobic (preferably Leu), and Yaa (Ala or Ser) and Zaa (Gly or Ala) have small, neutral side chains.. Its pathway is protein modification; lipoprotein biosynthesis (signal peptide cleavage). In terms of biological role, this protein specifically catalyzes the removal of signal peptides from prolipoproteins. The chain is Lipoprotein signal peptidase from Wolinella succinogenes (strain ATCC 29543 / DSM 1740 / CCUG 13145 / JCM 31913 / LMG 7466 / NCTC 11488 / FDC 602W) (Vibrio succinogenes).